The sequence spans 1212 residues: Peregrin (1212 aa).

The C2H2-type zinc finger occupies 21 to 47 (YECPVETCRKVYKSYSGIEYHLYHYDH). Disordered stretches follow at residues 43 to 87 (YHYD…SPGR) and 118 to 176 (VVSE…PKLP). The span at 58–67 (LRKHKKKGRQ) shows a compositional bias: basic residues. The interaction with KAT6A and KAT6B stretch occupies residues 59-221 (RKHKKKGRQS…VEYDMDEEDY (163 aa)). The segment covering 74 to 85 (QSPSPSEVSQSP) has biased composition (low complexity). Residues 119-130 (VSEDEEAPEEAP) show a composition bias toward acidic residues. At Ser-120 the chain carries Phosphoserine. The residue at position 147 (Lys-147) is an N6-acetyllysine. The segment covering 148–166 (SGKHKNKEKRKDSNHHHHS) has biased composition (basic residues). Ser-237 is subject to Phosphoserine. The segment at 272–322 (DAVCCICNDGECQNSNVILFCDMCNLAVHQECYGVPYIPEGQWLCRRCLQS) adopts a PHD-type 1 zinc-finger fold. A C2HC pre-PHD-type zinc finger spans residues 326 to 359 (AVDCALCPNKGGAFKQTDDGRWAHVVCALWIPEV). The PHD-type 2 zinc-finger motif lies at 383 to 447 (LTCYICKQRG…RKTAYCDIHT (65 aa)). Residues 447–489 (TPPGSARRLPALSHSEGEEEEDEEEDEGKSWSSEKVKKAKAKS) form a disordered region. 2 positions are modified to phosphoserine: Ser-459 and Ser-461. Over residues 463–473 (GEEEEDEEEDE) the composition is skewed to acidic residues. The tract at residues 500 to 819 (LAEKRAAAPV…IKKEMTALRR (320 aa)) is interaction with MEAF6 and ING5. Positions 542–1077 (YWTLKRQSRN…RGAGWLSEDE (536 aa)) are required for RUNX1 and RUNX2 transcriptional activation. N6-acetyllysine is present on Lys-579. One can recognise a Bromo domain in the interval 627 to 731 (MQLTPFLILL…EQGGAVLRQA (105 aa)). The disordered stretch occupies residues 817 to 1060 (LRRKLAHQRE…VGTGRGVGHS (244 aa)). Residues 823–836 (HQRETGRDGPERHG) show a composition bias toward basic and acidic residues. Thr-856 carries the post-translational modification Phosphothreonine. A compositionally biased stretch (low complexity) spans 856–869 (TDSAAEESSSQETS). A phosphoserine mark is found at Ser-858, Ser-915, Ser-920, and Ser-924. The segment covering 993-1019 (PRSSSDSESSSSSSSSAASDRTSTTPS) has biased composition (low complexity). Ser-1074 carries the phosphoserine modification. Residues 1083–1166 (ALDLVWAKCR…RTKLVPLGVN (84 aa)) form the PWWP domain. Residue Ser-1185 is modified to Phosphoserine.

Component of some HBO1 complex composed of KAT7/HBO1, MEAF6, ING5, and BRPF1. Component of the MOZ/MORF complex composed at least of ING5, KAT6A, KAT6B, MEAF6 and one of BRPF1, BRD1/BRPF2 and BRPF3. Interacts (via PHD-type zinc finger domains) with unmethylated histone H3 at 'Lys-4' (H3K4me0). Interacts with trimethylated 'Lys-36' of histone H3 (H3K36me3). Interacts with ING5; interaction directs BRPF1 to H4K4me3-enriched chromatin at the 5' of active genes. Interacts with KAT7. Post-translationally, acetylated by KAT6A. In terms of tissue distribution, expressed at low level in most tissues, with high expression in the testis and specific regions of the brain.

Its subcellular location is the nucleus. The protein resides in the chromosome. The protein localises to the cytoplasm. Its function is as follows. Scaffold subunit of various histone acetyltransferase (HAT) complexes, such as the MOZ/MORF and HBO1 complexes, which have a histone H3 acetyltransferase activity. Plays a key role in HBO1 complex by directing KAT7/HBO1 specificity towards histone H3 'Lys-14' acetylation (H3K14ac). Some HAT complexes preferentially mediate histone H3 'Lys-23' (H3K23ac) acetylation. Positively regulates the transcription of RUNX1 and RUNX2. The sequence is that of Peregrin from Mus musculus (Mouse).